Here is a 484-residue protein sequence, read N- to C-terminus: tRNA nucleotidyltransferase cca2 (484 aa).

The short motif at 122 to 124 (RAE) is the B/A element element. The interval 125-142 (SYDDKSRIPSVTPGTVET) is flexible loop. Residues 234 to 244 (ERVGEEIEKML) carry the ERhxxExxxhh motif motif.

Belongs to the tRNA nucleotidyltransferase/poly(A) polymerase family.

The protein localises to the cytoplasm. The enzyme catalyses a tRNA with a 3' CC end + ATP = a tRNA with a 3' CCA end + diphosphate. Functionally, tRNA nucleotidyltransferase involved in the synthesis of the tRNA CCA terminus. In contrast to what is usually observed in eukaryotes for which one enzyme synthesizes the whole tRNA CCA terminus, in S.pombe, cca1 specifically adds two cytidine residues to a tRNA substrate lacking this sequence while cca2 specifically adds the terminal adenosine residue thereby completing the CCA sequence. The protein is tRNA nucleotidyltransferase cca2 of Schizosaccharomyces pombe (strain 972 / ATCC 24843) (Fission yeast).